We begin with the raw amino-acid sequence, 119 residues long: Putative mating-type protein A2 (119 aa).

A DNA-binding region (homeobox; TALE-type) is located at residues 38-100 (KPYRGHRFTK…NRRRKEKTIT (63 aa)).

The protein belongs to the TALE/M-ATYP homeobox family.

It is found in the nucleus. In terms of biological role, probably not a functional protein. Cells lacking A2 show no obvious alterations in mating, sporulation and cell growth. In Saccharomyces cerevisiae (Baker's yeast), this protein is Putative mating-type protein A2 (MATA2).